Consider the following 349-residue polypeptide: Fe(3+) ions import ATP-binding protein FbpC (349 aa).

Residues 4–236 (LELHHIGKSY…PVDEPTATFL (233 aa)) form the ABC transporter domain. 36–43 (GPSGSGKT) contributes to the ATP binding site.

Belongs to the ABC transporter superfamily. Fe(3+) ion importer (TC 3.A.1.10) family. As to quaternary structure, the complex is composed of two ATP-binding proteins (FbpC), two transmembrane proteins (FbpB) and a solute-binding protein (FbpA).

It is found in the cell inner membrane. It carries out the reaction Fe(3+)(out) + ATP + H2O = Fe(3+)(in) + ADP + phosphate + H(+). In terms of biological role, part of the ABC transporter complex FbpABC involved in Fe(3+) ions import. Responsible for energy coupling to the transport system. The polypeptide is Fe(3+) ions import ATP-binding protein FbpC (Yersinia pestis bv. Antiqua (strain Antiqua)).